The primary structure comprises 7913 residues: Nonribosomal peptide synthetase dtxS1 (7913 aa).

The segment at 263-662 is adenylation 1; sequence FEQRSRAHPN…GRNDNQVKIR (400 aa). Positions 789–865 constitute a Carrier 1 domain; the sequence is QPLSEVEKQV…NVAGQARRTT (77 aa). S826 carries the O-(pantetheine 4'-phosphoryl)serine modification. The segment at 903 to 1171 is condensation 1; that stretch reads QDAFPCTSLQ…ITTVPVRIRL (269 aa). An adenylation 2 region spans residues 1332-1740; it reads LETQAHSRPD…GRKDAQVKIR (409 aa). A Carrier 2 domain is found at 1865–1941; sequence QPRTKLERQL…NLAQATGTQG (77 aa). S1902 bears the O-(pantetheine 4'-phosphoryl)serine mark. The tract at residues 1965-2249 is condensation 2; that stretch reads PAQLSPIQRL…FSTIFPVRVS (285 aa). Positions 2863–3255 are adenylation 3; sequence LAQPHEPAIC…ARKDAQIKIR (393 aa). The 77-residue stretch at 3380-3456 folds into the Carrier 3 domain; that stretch reads QPLSEAERKM…NVTHQAVAQL (77 aa). S3417 carries the post-translational modification O-(pantetheine 4'-phosphoryl)serine. The interval 3496-3761 is condensation 3; the sequence is DAFPCTPLQE…FATLPLRVRL (266 aa). Residues 3924 to 4321 form an adenylation 4 region; sequence DRVRIHPNAP…GRKDDQVKLR (398 aa). Over residues 4439–4450 the composition is skewed to polar residues; sequence ELAQARTAQQGP. Residues 4439 to 4459 are disordered; it reads ELAQARTAQQGPKRQPASEAE. The Carrier 4 domain occupies 4453–4529; the sequence is QPASEAERQM…EAATQAQMLG (77 aa). S4490 is subject to O-(pantetheine 4'-phosphoryl)serine. The segment at 4545-4837 is condensation 4; it reads QSFAQARLWF…VNMQCLRVKI (293 aa). Residues 5006-5405 form an adenylation 5 region; sequence FRQQVAACAD…RRMDAQVKIR (400 aa). The Carrier 5 domain occupies 5933–6009; the sequence is QPTSKTQRQL…DMAEGLPLAK (77 aa). Residue S5970 is modified to O-(pantetheine 4'-phosphoryl)serine. The tract at residues 6023–6315 is condensation 5; it reads VEQSFAQRRL…VNMQCIRIRV (293 aa). Residues 6481 to 6766 form an adenylation 6 region; sequence FRQQALLNPD…IINAYGPTEN (286 aa). A Carrier 6 domain is found at 7394 to 7470; that stretch reads QPTTDMEREM…DLACHLSPEE (77 aa). S7431 is subject to O-(pantetheine 4'-phosphoryl)serine. A condensation 6 region spans residues 7501–7771; sequence EDVLPLTSFQ…CLNIVPIRVN (271 aa).

This sequence belongs to the NRP synthetase family.

It participates in secondary metabolite biosynthesis. Nonribosomal peptide synthetase; part of the gene cluster that mediates the biosynthesis of destruxins, insecticidal cyclic hexadepsipeptides which induce flaccid paralysis and visceral muscle contraction in insects through targeting the calcium channels and vacuolar-type ATPases. The aldo-keto reductase dtxS3 converts alpha-ketoisocaproic acid from deaminated leucine into alpha-hydroxyisocaproic acid (HIC), which is the first substrate for destruxin assembly by dtxS1. L-aspartate decarboxylase dtxS4 converts aspartic acid into beta-alanine, the last substrate for the destruxin assembly line performed by dtxS1. The nonribosomal peptide synthetase dtxS1 synthesizes destruxins B and B2, whereas the cytochrome P450 monooxygenase dtxS2 is required to convert destruxin B into other destruxin derivatives, including destructins C, D, A and E. Destruxin E-diol (ED) is further produced in a non-enzymatic manner from destruxin E. Destruxins play an important role in virulence and escape from insect host immune defenses. The polypeptide is Nonribosomal peptide synthetase dtxS1 (Metarhizium robertsii (strain ARSEF 23 / ATCC MYA-3075) (Metarhizium anisopliae (strain ARSEF 23))).